The chain runs to 326 residues: Adenosine receptor A1 (326 aa).

Residues 1-10 (MPPSISAFQA) lie on the Extracellular side of the membrane. A helical membrane pass occupies residues 11-33 (AYIGIEVLIALVSVPGNVLVIWA). The Cytoplasmic segment spans residues 34–46 (VKVNQALRDATFC). A helical membrane pass occupies residues 47–69 (FIVSLAVADVAVGALVIPLAILI). Residues 70–80 (NIGPQTYFHTC) lie on the Extracellular side of the membrane. A disulfide bridge links C80 with C169. The helical transmembrane segment at 81 to 102 (LMVACPVLILTQSSILALLAIA) threads the bilayer. The Cytoplasmic portion of the chain corresponds to 103–123 (VDRYLRVKIPLRYKMVVTPRR). The chain crosses the membrane as a helical span at residues 124-146 (AAVAIAGCWILSFVVGLTPMFGW). Topologically, residues 147 to 176 (NNLSAVERAWAANGSMGEPVIKCEFEKVIS) are extracellular. The N-linked (GlcNAc...) asparagine glycan is linked to N159. Residues 177-201 (MEYMVYFNFFVWVLPPLLLMVLIYL) traverse the membrane as a helical segment. Residues 202-235 (EVFYLIRKQLNKKVSASSGDPQKYYGKELKIAKS) lie on the Cytoplasmic side of the membrane. The chain crosses the membrane as a helical span at residues 236 to 259 (LALILFLFALSWLPLHILNCITLF). Topologically, residues 260–267 (CPSCHKPS) are extracellular. A helical membrane pass occupies residues 268 to 292 (ILTYIAIFLTHGNSAMNPIVYAFRI). Residues 293 to 326 (QKFRVTFLKIWNDHFRCQPAPPIDEDLPEERPDD) are Cytoplasmic-facing. A lipid anchor (S-palmitoyl cysteine) is attached at C309.

Belongs to the G-protein coupled receptor 1 family.

The protein localises to the cell membrane. In terms of biological role, receptor for adenosine. The activity of this receptor is mediated by G proteins which inhibit adenylyl cyclase. This is Adenosine receptor A1 (ADORA1) from Homo sapiens (Human).